A 434-amino-acid polypeptide reads, in one-letter code: Trigger factor (434 aa).

One can recognise a PPIase FKBP-type domain in the interval 160-245; it reads GDKVKMNFVG…LTEVQAANLP (86 aa).

The protein belongs to the FKBP-type PPIase family. Tig subfamily.

It is found in the cytoplasm. It carries out the reaction [protein]-peptidylproline (omega=180) = [protein]-peptidylproline (omega=0). Its function is as follows. Involved in protein export. Acts as a chaperone by maintaining the newly synthesized protein in an open conformation. Functions as a peptidyl-prolyl cis-trans isomerase. This chain is Trigger factor, found in Shewanella putrefaciens (strain CN-32 / ATCC BAA-453).